Here is a 581-residue protein sequence, read N- to C-terminus: Proline--tRNA ligase (581 aa).

It belongs to the class-II aminoacyl-tRNA synthetase family. ProS type 1 subfamily. As to quaternary structure, homodimer.

It is found in the cytoplasm. It carries out the reaction tRNA(Pro) + L-proline + ATP = L-prolyl-tRNA(Pro) + AMP + diphosphate. Its function is as follows. Catalyzes the attachment of proline to tRNA(Pro) in a two-step reaction: proline is first activated by ATP to form Pro-AMP and then transferred to the acceptor end of tRNA(Pro). As ProRS can inadvertently accommodate and process non-cognate amino acids such as alanine and cysteine, to avoid such errors it has two additional distinct editing activities against alanine. One activity is designated as 'pretransfer' editing and involves the tRNA(Pro)-independent hydrolysis of activated Ala-AMP. The other activity is designated 'posttransfer' editing and involves deacylation of mischarged Ala-tRNA(Pro). The misacylated Cys-tRNA(Pro) is not edited by ProRS. This is Proline--tRNA ligase from Chlamydia trachomatis serovar A (strain ATCC VR-571B / DSM 19440 / HAR-13).